The primary structure comprises 110 residues: UPF0122 protein lmo1802 (110 aa).

The protein belongs to the UPF0122 family.

In terms of biological role, might take part in the signal recognition particle (SRP) pathway. This is inferred from the conservation of its genetic proximity to ftsY/ffh. May be a regulatory protein. In Listeria monocytogenes serovar 1/2a (strain ATCC BAA-679 / EGD-e), this protein is UPF0122 protein lmo1802.